The chain runs to 543 residues: UPF0324 membrane protein RB9488 (543 aa).

Residues 1 to 22 (MNSNTPSSDNSSPDNVSPDTSD) show a composition bias toward low complexity. A disordered region spans residues 1 to 41 (MNSNTPSSDNSSPDNVSPDTSDMASAGDDSALATPPPRPSL). The helical transmembrane segment at 51 to 73 (WWAIWCAALLLLIAFAAVWIGQP) threads the bilayer. The disordered stretch occupies residues 91-120 (VETAPENAGPSAEAENEAIETENTAPAENA). A run of 11 helical transmembrane segments spans residues 160-182 (ISSS…AFAN), 189-211 (AGAF…WMSG), 221-243 (EYAL…PDFL), 270-292 (LALG…ITTY), 307-329 (NMVI…AAAC), 336-358 (LSLS…PAVI), 368-390 (GGAW…AVLG), 403-422 (IQNI…WVTF), 437-459 (IWYR…SILY), 479-496 (TLRG…GLET), and 511-533 (LVLY…YLMF).

This sequence belongs to the UPF0324 family.

It localises to the cell membrane. This Rhodopirellula baltica (strain DSM 10527 / NCIMB 13988 / SH1) protein is UPF0324 membrane protein RB9488.